The following is a 490-amino-acid chain: Hippocampus abundant transcript 1 protein (490 aa).

Met-1 carries the post-translational modification N-acetylmethionine. Topologically, residues 1 to 40 (MTQGKKKKRAANRSIMLAKKIIIKDGGTPQGIGSPSVYHA) are extracellular. The N-linked (GlcNAc...) asparagine glycan is linked to Asn-12. The chain crosses the membrane as a helical span at residues 41–61 (VIVIFLEFFAWGLLTAPTLVV). Residues 62-74 (LHETFPKHTFLMN) are Cytoplasmic-facing. The helical transmembrane segment at 75–95 (GLIQGVKGLLSFLSAPLIGAL) threads the bilayer. The Extracellular segment spans residues 96–103 (SDVWGRKS). The chain crosses the membrane as a helical span at residues 104-124 (FLLLTVFFTCAPIPLMKISPW). Residues 125 to 126 (WY) lie on the Cytoplasmic side of the membrane. The helical transmembrane segment at 127-147 (FAVISVSGVFAVTFSVVFAYV) threads the bilayer. Topologically, residues 148-160 (ADITQEHERSMAY) are extracellular. The chain crosses the membrane as a helical span at residues 161–181 (GLVSATFAASLVTSPAIGAYL). The Cytoplasmic portion of the chain corresponds to 182-188 (GRVYGDS). A helical membrane pass occupies residues 189–209 (LVVVLATAIALLDICFILVAV). Over 210–243 (PESLPEKMRPASWGAPISWEQADPFASLKKVGQD) the chain is Extracellular. A helical membrane pass occupies residues 244-264 (SIVLLICITVFLSYLPEAGQY). Over 265-284 (SSFFLYLRQIMKFSPESVAA) the chain is Cytoplasmic. The helical transmembrane segment at 285-305 (FIAVLGILSIIAQTIVLSLLM) threads the bilayer. Residues 306-313 (RSIGNKNT) lie on the Extracellular side of the membrane. A helical transmembrane segment spans residues 314 to 334 (ILLGLGFQILQLAWYGFGSEP). The Cytoplasmic portion of the chain corresponds to 335-337 (WMM). A helical transmembrane segment spans residues 338 to 358 (WAAGAVAAMSSITFPAVSALV). The Extracellular portion of the chain corresponds to 359–379 (SRTADADQQGVVQGMITGIRG). A helical membrane pass occupies residues 380 to 400 (LCNGLGPALYGFIFYIFHVEL). The Cytoplasmic portion of the chain corresponds to 401 to 427 (KELPITGTDLGTNTSPQHHFEQNSIIP). The helical transmembrane segment at 428-448 (GPPFLFGACSVLLALLVALFI) threads the bilayer. At 449-490 (PEHTNLSLRSSSWRKHCGSHSHPHSTQAPGEAKEPLLQDTNV) the chain is on the extracellular side. N-linked (GlcNAc...) asparagine glycosylation is present at Asn-453. Residues 466 to 490 (GSHSHPHSTQAPGEAKEPLLQDTNV) form a disordered region.

It belongs to the major facilitator superfamily. As to expression, expressed in various tissues.

The protein resides in the membrane. In Mus musculus (Mouse), this protein is Hippocampus abundant transcript 1 protein.